The following is a 250-amino-acid chain: Vacuolar protein sorting-associated protein 22 homolog 1 (250 aa).

Residues 35–55 (MKEQLSTFRSQLEEFARKHKN) are a coiled coil.

The protein belongs to the SNF8 family. Component of the endosomal sorting complex required for transport II (ESCRT-II), composed of VPS22, VPS25 and VPS36.

The protein resides in the endosome. In terms of biological role, component of the endosomal sorting complex required for transport II (ESCRT-II), which is required for multivesicular body (MVB) formation and sorting of endosomal cargo proteins into MVBs. The ESCRT-II complex is probably involved in the recruitment of the ESCRT-III complex. The protein is Vacuolar protein sorting-associated protein 22 homolog 1 (VP22-1) of Arabidopsis thaliana (Mouse-ear cress).